We begin with the raw amino-acid sequence, 479 residues long: Solute carrier family 7 member 13 (479 aa).

The Cytoplasmic portion of the chain corresponds to 1–14; the sequence is MAMDIEKKIYLKRQ. The chain crosses the membrane as a helical span at residues 15–35; the sequence is LGYFWGTNFLIINIIGAGIFV. The Extracellular segment spans residues 36–47; that stretch reads SPKGVLQYSSMN. A helical transmembrane segment spans residues 48-68; it reads VGVSLCVWVFCAVLSMTSTLC. The Cytoplasmic portion of the chain corresponds to 69–89; the sequence is AAEIGITFPYTVAHYYFLKRC. Residues 90–110 form a helical membrane-spanning segment; it reads FGPFVAFLRLWTSLFTGPGVL. Residues 111–129 lie on the Extracellular side of the membrane; it reads ASQALLLAEYGIQPFYPSC. Residues 130 to 150 traverse the membrane as a helical segment; the sequence is SAPAVPKKCLALAMLWIVGIL. The Cytoplasmic segment spans residues 151-165; the sequence is NSRGVKELSWLQTVS. A helical transmembrane segment spans residues 166-186; sequence MVLKMGILSFISLSGLFLLVT. Residues 187 to 208 are Extracellular-facing; sequence GRKENVRRLQNAFDAEFPEVSR. The chain crosses the membrane as a helical span at residues 209–229; it reads LIEAIFQGYFAFSGGGSFTYV. Residues 230–242 lie on the Cytoplasmic side of the membrane; that stretch reads AGELKEPSKTIPR. The chain crosses the membrane as a helical span at residues 243–263; it reads CIFTALPLVTVVYLLANLSYL. Residues 264 to 289 lie on the Extracellular side of the membrane; sequence TVLSPQELLSSDAVALTWTDRVIPQL. Residues 290–310 traverse the membrane as a helical segment; the sequence is TWSVPFAISASLFSNLVTSVF. The Cytoplasmic portion of the chain corresponds to 311–338; the sequence is ETSRTSYIASRNGQLPLLCSTLNVHSSP. The chain crosses the membrane as a helical span at residues 339-359; sequence FIAVLLDVSMGSIAIVLTNLI. Residue Glu-360 is a topological domain, extracellular. The chain crosses the membrane as a helical span at residues 361–381; sequence LINYLFFVFSIWTVLSVIGIL. Residues 382 to 396 are Cytoplasmic-facing; it reads KLRYQEPNLHRPYKV. Residues 397 to 417 form a helical membrane-spanning segment; the sequence is FSPFLFITAAISLSMVLIPLI. At 418–423 the chain is on the extracellular side; it reads KSPKMQ. The chain crosses the membrane as a helical span at residues 424 to 444; that stretch reads YIYVFLFFLGGLLFYVPLIHF. Residues 445-479 are Cytoplasmic-facing; it reads KLKLIWFQKLTCYLQLLFNICIPDVSDEHVAEEES.

Belongs to the amino acid-polyamine-organocation (APC) superfamily. Disulfide-linked heterodimer composed of the catalytic light subunit SLC7A13 and the heavy subunit SLC3A1.

It is found in the apical cell membrane. It carries out the reaction L-cystine(out) + L-aspartate(in) = L-cystine(in) + L-aspartate(out). The enzyme catalyses L-cystine(out) = L-cystine(in). The catalysed reaction is L-aspartate(in) + L-glutamate(out) = L-aspartate(out) + L-glutamate(in). It catalyses the reaction L-aspartate(in) + L-glutamine(out) = L-aspartate(out) + L-glutamine(in). It carries out the reaction L-aspartate(in) + L-methionine(out) = L-aspartate(out) + L-methionine(in). The enzyme catalyses L-leucine(out) + L-aspartate(in) = L-leucine(in) + L-aspartate(out). The catalysed reaction is L-valine(out) + L-aspartate(in) = L-valine(in) + L-aspartate(out). It catalyses the reaction L-aspartate(in) + L-phenylalanine(out) = L-aspartate(out) + L-phenylalanine(in). It carries out the reaction L-tyrosine(out) + L-aspartate(in) = L-tyrosine(in) + L-aspartate(out). The enzyme catalyses L-tryptophan(out) + L-aspartate(in) = L-tryptophan(in) + L-aspartate(out). In terms of biological role, associates with SLC3A1/rBAT to form a functional heterodimeric complex that transports anionic and neutral amino acids across the apical plasma membrane of renal epithelium. Preferentially mediates exchange transport, but can also operate via facilitated diffusion. May act as a major transporter for L-cystine in late proximal tubules, ensuring its reabsorption from the luminal fluid in exchange for cytosolic L-glutamate or L-aspartate. This Rattus norvegicus (Rat) protein is Solute carrier family 7 member 13 (Slc7a13).